Here is a 357-residue protein sequence, read N- to C-terminus: Histidinol-phosphate aminotransferase (357 aa).

The residue at position 212 (lysine 212) is an N6-(pyridoxal phosphate)lysine.

This sequence belongs to the class-II pyridoxal-phosphate-dependent aminotransferase family. Histidinol-phosphate aminotransferase subfamily. Homodimer. Pyridoxal 5'-phosphate serves as cofactor.

It carries out the reaction L-histidinol phosphate + 2-oxoglutarate = 3-(imidazol-4-yl)-2-oxopropyl phosphate + L-glutamate. It functions in the pathway amino-acid biosynthesis; L-histidine biosynthesis; L-histidine from 5-phospho-alpha-D-ribose 1-diphosphate: step 7/9. The polypeptide is Histidinol-phosphate aminotransferase (Pectobacterium carotovorum subsp. carotovorum (strain PC1)).